The chain runs to 1898 residues: Receptor-type tyrosine-protein phosphatase F (1898 aa).

The N-terminal stretch at 1-29 (MTPEPAPGRTMVPLVPALVMLGLVAGAHG) is a signal peptide. Residues 30–1254 (DSKPVFVKVP…QQQEEPELLW (1225 aa)) are Extracellular-facing. 3 Ig-like C2-type domains span residues 33–123 (PVFV…AKLS), 135–224 (PSID…ANLY), and 232–314 (PRFS…AQVT). A disulfide bridge connects residues Cys54 and Cys107. 68–77 (KKGKKVSSQR) contributes to the heparin binding site. Asn117 carries N-linked (GlcNAc...) asparagine glycosylation. Cysteines 156 and 207 form a disulfide. Asn250 and Asn295 each carry an N-linked (GlcNAc...) asparagine glycan. An intrachain disulfide couples Cys253 to Cys298. Fibronectin type-III domains are found at residues 321-411 (PPID…TGEQ), 416-510 (PPRR…TQQG), 514-604 (QPAD…TAQS), 609-706 (PPQK…TDED), 711-810 (PPRK…TTGA), 811-905 (VPGR…PEDV), 909-1001 (FPQN…TMPV), and 1005-1089 (FAKN…TAPD). The disordered stretch occupies residues 399–418 (PPSEAVRARTGEQAPSSPPR). Residues 693 to 713 (GPESSPVLVRTDEDVPSGPPR) form a disordered region. Asn721 carries an N-linked (GlcNAc...) asparagine glycan. N-linked (GlcNAc...) asparagine glycans are attached at residues Asn941 and Asn957. The helical transmembrane segment at 1255 to 1275 (VTGPVLAVILIVLIVIAILLF) threads the bilayer. Over 1276-1898 (KRKRTHSPSS…YLGSFDHYAT (623 aa)) the chain is Cytoplasmic. At Ser1296 the chain carries Phosphoserine. 2 Tyrosine-protein phosphatase domains span residues 1343–1598 (FSQE…LLEA) and 1630–1889 (MELE…ALEY). Substrate-binding positions include Asp1507, 1539 to 1545 (CSAGVGR), and Gln1583. Cys1539 serves as the catalytic Phosphocysteine intermediate. Catalysis depends on Cys1830, which acts as the Phosphocysteine intermediate.

It belongs to the protein-tyrosine phosphatase family. Receptor class 2A subfamily. As to quaternary structure, interacts with GRIP1. Interacts with PPFIA1, PPFIA2 and PPFIA3. Interacts with INSR.

Its subcellular location is the membrane. It carries out the reaction O-phospho-L-tyrosyl-[protein] + H2O = L-tyrosyl-[protein] + phosphate. Possible cell adhesion receptor. It possesses an intrinsic protein tyrosine phosphatase activity (PTPase) and dephosphorylates EPHA2 regulating its activity. In terms of biological role, the first PTPase domain has enzymatic activity, while the second one seems to affect the substrate specificity of the first one. This is Receptor-type tyrosine-protein phosphatase F (PTPRF) from Bos taurus (Bovine).